We begin with the raw amino-acid sequence, 438 residues long: UDP-glycosyltransferase 84B2 (438 aa).

Residues Ser-260, 314–316 (GQQ), 331–339 (HCGWNSTIE), and 353–356 (WIDQ) contribute to the UDP-alpha-D-glucose site.

Belongs to the UDP-glycosyltransferase family.

This Arabidopsis thaliana (Mouse-ear cress) protein is UDP-glycosyltransferase 84B2 (UGT84B2).